We begin with the raw amino-acid sequence, 453 residues long: MGLPIVAIIGRPNVGKSTLVNRLAGEQTAIVHDEPGVTRDRTYLPAYWSDREFQVVDTGGLVFNDDTEFLPLIRQQALAALHEASAAIFVVNGQTGPNSADEEIAEWLRQQPVPVFLAVNKCESPDQGSIQASEFWELGLGEPYPISAIHGNGTGELLDELIKHLPPTTELEENNEIKIAIIGRPNVGKSSLLNAFAGEERVIVSPISGTTRDAIDTFIERNGQNYRLIDTAGIRKKKSIDYGTEFFSINRAFKAIRRADVVLLVIDALDGVTEQDQKLAGRILDEGKACVVVVNKWDAVEKDSYTIYDYEKNLEARLHFTEWADTIYVSAVTGQRVEKILELVTKANEEHKRRVSTSVINEVLEDAVSWHSPPTSRGGRQGRIYYGTQVSTQPPTIALFVNEAKRFNDNYRRYIERQFRQQLGFKGTPIRLLWRSKKVRDVESGSANRATRV.

EngA-type G domains lie at 4-169 (PIVA…PPTT) and 177-352 (IKIA…EEHK). GTP contacts are provided by residues 10–17 (GRPNVGKS), 57–61 (DTGGL), 120–123 (NKCE), 183–190 (GRPNVGKS), 230–234 (DTAGI), and 295–298 (NKWD). The 86-residue stretch at 353-438 (RRVSTSVINE…PIRLLWRSKK (86 aa)) folds into the KH-like domain.

The protein belongs to the TRAFAC class TrmE-Era-EngA-EngB-Septin-like GTPase superfamily. EngA (Der) GTPase family. In terms of assembly, associates with the 50S ribosomal subunit.

Its function is as follows. GTPase that plays an essential role in the late steps of ribosome biogenesis. The sequence is that of GTPase Der from Trichormus variabilis (strain ATCC 29413 / PCC 7937) (Anabaena variabilis).